Here is a 544-residue protein sequence, read N- to C-terminus: Chaperonin GroEL (544 aa).

Residues 29–32 (TMGP), K50, 86–90 (DGTTT), G414, 477–479 (NAV), and D493 contribute to the ATP site.

Belongs to the chaperonin (HSP60) family. Forms a cylinder of 14 subunits composed of two heptameric rings stacked back-to-back. Interacts with the co-chaperonin GroES.

It is found in the cytoplasm. The enzyme catalyses ATP + H2O + a folded polypeptide = ADP + phosphate + an unfolded polypeptide.. Functionally, together with its co-chaperonin GroES, plays an essential role in assisting protein folding. The GroEL-GroES system forms a nano-cage that allows encapsulation of the non-native substrate proteins and provides a physical environment optimized to promote and accelerate protein folding. The protein is Chaperonin GroEL of Campylobacter curvus (strain 525.92).